A 211-amino-acid chain; its full sequence is Probable GTP-binding protein EngB (211 aa).

The 175-residue stretch at 30-204 (EGFEVAFAGR…YTVLAGWMEL (175 aa)) folds into the EngB-type G domain. Residues 38–45 (GRSNAGKS), 64–68 (GRTQL), 82–85 (DLPG), 149–152 (TKAD), and 182–185 (LFSA) contribute to the GTP site. Mg(2+) is bound by residues S45 and T66.

It belongs to the TRAFAC class TrmE-Era-EngA-EngB-Septin-like GTPase superfamily. EngB GTPase family. It depends on Mg(2+) as a cofactor.

Functionally, necessary for normal cell division and for the maintenance of normal septation. The sequence is that of Probable GTP-binding protein EngB from Pseudomonas syringae pv. tomato (strain ATCC BAA-871 / DC3000).